The following is a 3075-amino-acid chain: Lovastatin nonaketide synthase mokA (3075 aa).

Positions 49 to 488 (NEPIVVVGSG…GTNAHAIIEE (440 aa)) constitute a Ketosynthase family 3 (KS3) domain. Catalysis depends on for beta-ketoacyl synthase activity residues C222, H361, and H408. Residues 603–945 (VFTGQGAQWP…AYLWEQFGIP (343 aa)) are acyl and malonyl transferase. The active-site For malonyltransferase activity is S697. Residues 997-1133 (HLLLGKLSEY…GQLVVTLDEG (137 aa)) are N-terminal hotdog fold. Positions 997–1311 (HLLLGKLSEY…FKPFSPPTAS (315 aa)) constitute a PKS/mFAS DH domain. The Proton acceptor; for dehydratase activity role is filled by H1029. The dehydratase-like stretch occupies residues 1029–1041 (HALQGQVVFPAAG). The interval 1156-1311 (MNRVNINSFY…FKPFSPPTAS (156 aa)) is C-terminal hotdog fold. The Proton donor; for dehydratase activity role is filled by D1218. A methyltransferase region spans residues 1556-1594 (YDLIIASNVLHATPDLEKTMAHARSLLKPGGQMVILEIT). The segment at 2176–2470 (ALPARIRPID…FKIPERRGKA (295 aa)) is beta-ketoacyl reductase. Residues 2492-2571 (DQVRQIVIDG…DLADDAAARL (80 aa)) form the Carrier domain. O-(pantetheine 4'-phosphoryl)serine is present on S2531. Positions 2582–2624 (SEGGAETSDNDTSGPEGTDLSASTTITEPSSADEEDEKQEDDN) are disordered. A compositionally biased stretch (polar residues) spans 2591-2611 (NDTSGPEGTDLSASTTITEPS). Acidic residues predominate over residues 2612-2624 (SADEEDEKQEDDN). The peptide synthetase elongation stretch occupies residues 2633–2989 (PLSLGQEYAW…AETAEPAPLF (357 aa)).

The cofactor is pantetheine 4'-phosphate.

The catalysed reaction is holo-[lovastatin nonaketide synthase] + 9 malonyl-CoA + S-adenosyl-L-methionine + 11 NADPH + 19 H(+) = dihydromonacolin L-[lovastatin nonaketide synthase] + S-adenosyl-L-homocysteine + 9 CO2 + 11 NADP(+) + 9 CoA + 6 H2O. The protein operates within polyketide biosynthesis; lovastatin biosynthesis. In terms of biological role, nonaketide synthase; part of the gene cluster that mediates the biosynthesis of monakolin K, also known as lovastatin, and which acts as a potent competitive inhibitor of HMG-CoA reductase. Monakolin K biosynthesis is performed in two stages. The first stage is catalyzed by the nonaketide synthase mokA, which belongs to type I polyketide synthases and catalyzes the iterative nine-step formation of the polyketide. This PKS stage is completed by the action of dehydrogenase mokE, which catalyzes the NADPH-dependent reduction of the unsaturated tetra-, penta- and heptaketide intermediates that arise during the mokA-mediated biosynthesis of the nonaketide chain and leads to dihydromonacolin L. Covalently bound dihydromonacolin L is released from mokA by the mokD esterase. Conversion of dihydromonacolin L into monacolin L and then monacolin J is subsequently performed with the participation of molecular oxygen and P450 monoogygenase mokC. Finally, mokF performs the conversion of monacoline J to monacoline K through the addition of the side-chain diketide moiety (2R)-2-methylbutanoate produced by the diketide synthase mokB. This chain is Lovastatin nonaketide synthase mokA, found in Monascus pilosus (Red mold).